We begin with the raw amino-acid sequence, 1465 residues long: Claspin (1465 aa).

Low complexity predominate over residues 1-12 (MSESLAETAAAA). 3 disordered regions span residues 1–490 (MSES…KAKV), 544–566 (ATALAGGSPMPSRQPRKSVGLRM), and 585–636 (ATEF…TEDM). Residues Ser-45, Ser-49, Ser-52, Ser-64, Ser-75, Ser-109, and Ser-114 each carry the phosphoserine modification. Over residues 121-133 (QAEKKTQKEEGKQ) the composition is skewed to basic and acidic residues. A compositionally biased stretch (basic residues) spans 154 to 163 (KSNKTKKAVK). The segment covering 205 to 216 (EYDHHQQHEKPA) has biased composition (basic and acidic residues). The segment covering 217 to 228 (KTQKSKKLAKKQ) has biased composition (basic residues). Basic and acidic residues-rich tracts occupy residues 229–246 (KQQEDDKEDNGTEQEKKK), 254–263 (KKSDKSKIDS), 273–286 (EDLKMYQEDQEPQK), and 296–335 (TNKDSKEESGEDQEHQEQKKPLKKIKLDNIDTKEDKEQIV). Residues 260 to 281 (KIDSLMDNEEDAGEDLKMYQED) adopt a coiled-coil conformation. The span at 336–346 (KPKKMAKKNKQ) shows a compositional bias: basic residues. A phosphoserine mark is found at Ser-350 and Ser-354. Over residues 358–373 (QNEKVDQDHDLKKMSS) the composition is skewed to basic and acidic residues. Acidic residues predominate over residues 375-388 (NELEMGSDKEDQEM). A phosphoserine mark is found at Ser-381, Ser-404, Ser-406, Ser-432, Ser-434, Ser-444, Ser-456, Ser-458, and Ser-468. The segment covering 400-417 (QRMDSESEDEIPKTESEK) has biased composition (basic and acidic residues). Positions 432 to 441 (SESEPEETAE) are enriched in acidic residues. The span at 456 to 470 (SESEPELDNPEESAG) shows a compositional bias: acidic residues. A coiled-coil region spans residues 564 to 587 (LRMTREELEAYAKLMEDRAKEATE). Residues 594–606 (ESDEEDDSENEEP) show a composition bias toward acidic residues. The residue at position 693 (Thr-693) is a Phosphothreonine. Residues 839–874 (LITKKRMEDLRKKQAEEQEKMAEDEEEGMDVDEEYE) are a coiled coil. Over residues 845–859 (MEDLRKKQAEEQEKM) the composition is skewed to basic and acidic residues. The tract at residues 845–977 (MEDLRKKQAE…LDLLQTPKPS (133 aa)) is disordered. Acidic residues-rich tracts occupy residues 860–875 (AEDEEEGMDVDEEYEP), 913–942 (ADEDPEDNPVEDSEDEKNDSESEQECEANP), and 960–969 (DDNSDEDDLD). The residue at position 963 (Ser-963) is a Phosphoserine. At Thr-973 the chain carries Phosphothreonine. Phosphoserine is present on Ser-990. The segment at 1058-1154 (CSGTFATQLP…AEPVEEIPET (97 aa)) is disordered. Low complexity predominate over residues 1067-1076 (PSQAPTQQPE). A phosphoserine mark is found at Ser-1093 and Ser-1094. A compositionally biased stretch (acidic residues) spans 1094–1103 (SDEEAQEDAL). Over residues 1109–1123 (RNKKLTKKRPKKKAK) the composition is skewed to basic residues. A compositionally biased stretch (acidic residues) spans 1127-1154 (SDDEDSDDEVEEFDEESDAEPVEEIPET). Position 1287 is a phosphoserine (Ser-1287).

Belongs to the claspin family. Phosphorylated in response to DNA damage by IR and HU treatment. Phosphorylation does not require mei-41 or tefu. Detected in the ovary but not in the testis (at protein level).

It is found in the nucleus. Functionally, required for checkpoint signaling in response to DNA replication stress; either resulting from normal embryogenesis or induced by the DNA synthesis inhibitor hydroxyurea (HU). It is not required for the G2 arrest resulting from DNA double strand breaks induced by ionizing irradiation (IR). Necessary for the timely phosphorylation of Cdk1 at the mid-blastula transition. May have a minor role in maintaining genomic stability in mitotic cells. The protein is Claspin of Drosophila melanogaster (Fruit fly).